Consider the following 125-residue polypeptide: UPF0332 protein AF_0298 (125 aa).

Belongs to the UPF0332 family.

The chain is UPF0332 protein AF_0298 from Archaeoglobus fulgidus (strain ATCC 49558 / DSM 4304 / JCM 9628 / NBRC 100126 / VC-16).